The primary structure comprises 359 residues: Phosphate acyltransferase (359 aa).

Belongs to the PlsX family. As to quaternary structure, homodimer. Probably interacts with PlsY.

The protein resides in the cytoplasm. The enzyme catalyses a fatty acyl-[ACP] + phosphate = an acyl phosphate + holo-[ACP]. Its pathway is lipid metabolism; phospholipid metabolism. In terms of biological role, catalyzes the reversible formation of acyl-phosphate (acyl-PO(4)) from acyl-[acyl-carrier-protein] (acyl-ACP). This enzyme utilizes acyl-ACP as fatty acyl donor, but not acyl-CoA. This is Phosphate acyltransferase from Citrobacter koseri (strain ATCC BAA-895 / CDC 4225-83 / SGSC4696).